A 1165-amino-acid chain; its full sequence is Tectonin beta-propeller repeat-containing protein 1 (1165 aa).

TECPR repeat units follow at residues 209–240 (LSVW…SLLD), 254–285 (DLLW…SIVE), 301–332 (SVVW…IEMV), and 344–376 (DQVW…KAII). Ser386, Ser388, Ser391, Ser412, and Ser417 each carry phosphoserine. Residues 404–486 (RGSGESAPSD…GPAPTPAELP (83 aa)) form a disordered region. The 107-residue stretch at 611-717 (KTGALQWWCD…WLALLSLSCC (107 aa)) folds into the PH domain. A TECPR 5 repeat occupies 729 to 756 (QAIWSITCKGDIFVSEPSPDLEAHEHPL). Ser938 and Ser949 each carry phosphoserine. TECPR repeat units lie at residues 953-984 (IALW…LHVG), 998-1029 (YQVW…YHIP), 1044-1075 (TSVY…EHVS), and 1087-1127 (DQVW…DYGI). The segment at 1140-1165 (ATRAPRSSSQEQEPSAPPEAHGPVCC) is disordered. Residues 1143–1153 (APRSSSQEQEP) are compositionally biased toward low complexity.

It belongs to the TECPR1 family. In terms of assembly, interacts with ATG5; the interaction is direct. Interacts with WIPI2. Interacts with the ATG5-ATG12 conjugate, the interaction is however mutually exclusive with ATG16, since it does not interact with ATG12-ATG5-ATG16 complex.

It localises to the cytoplasmic vesicle. It is found in the autophagosome membrane. The protein localises to the lysosome membrane. Functionally, tethering factor involved in autophagy. Involved in autophagosome maturation by promoting the autophagosome fusion with lysosomes: acts by associating with both the ATG5-ATG12 conjugate and phosphatidylinositol-3-phosphate (PtdIns(3)P) present at the surface of autophagosomes. Also involved in selective autophagy against bacterial pathogens, by being required for phagophore/preautophagosomal structure biogenesis and maturation. The protein is Tectonin beta-propeller repeat-containing protein 1 (TECPR1) of Homo sapiens (Human).